Reading from the N-terminus, the 254-residue chain is Ribosomal RNA small subunit methyltransferase G (254 aa).

Residues Gly92, 143 to 144, and Arg156 each bind S-adenosyl-L-methionine; that span reads AE.

It belongs to the methyltransferase superfamily. RNA methyltransferase RsmG family.

It is found in the cytoplasm. Its function is as follows. Specifically methylates the N7 position of a guanine in 16S rRNA. The polypeptide is Ribosomal RNA small subunit methyltransferase G (Leptospira interrogans serogroup Icterohaemorrhagiae serovar copenhageni (strain Fiocruz L1-130)).